A 444-amino-acid polypeptide reads, in one-letter code: Exodeoxyribonuclease 7 large subunit (444 aa).

The protein belongs to the XseA family. As to quaternary structure, heterooligomer composed of large and small subunits.

The protein resides in the cytoplasm. The enzyme catalyses Exonucleolytic cleavage in either 5'- to 3'- or 3'- to 5'-direction to yield nucleoside 5'-phosphates.. Its function is as follows. Bidirectionally degrades single-stranded DNA into large acid-insoluble oligonucleotides, which are then degraded further into small acid-soluble oligonucleotides. In Pseudoalteromonas atlantica (strain T6c / ATCC BAA-1087), this protein is Exodeoxyribonuclease 7 large subunit.